Reading from the N-terminus, the 301-residue chain is Probable alpha-L-glutamate ligase (301 aa).

One can recognise an ATP-grasp domain in the interval 104–287; that stretch reads LQLLSRKGIG…IAGIIIQYLE (184 aa). Residues Lys-141, 178-179, Asp-187, and 211-213 contribute to the ATP site; these read EY and RSN. Positions 248, 260, and 262 each coordinate Mg(2+). The Mn(2+) site is built by Asp-248, Glu-260, and Asn-262.

Belongs to the RimK family. Mg(2+) serves as cofactor. Mn(2+) is required as a cofactor.

This chain is Probable alpha-L-glutamate ligase, found in Pseudomonas aeruginosa (strain UCBPP-PA14).